Here is a 142-residue protein sequence, read N- to C-terminus: MAKKITAFIKLQVKAGQANPAPPVGPALGQRGLNIMEFCKAFNAATSKLEPGLPTPVIITAYSDRTFTFVTKSTPASVLLKKAAGVSSGSKRPNTDKVGKVTRKQLEEIAKVKEADLTAAELEAAVRTIAGSARSMGLTVEG.

It belongs to the universal ribosomal protein uL11 family. As to quaternary structure, part of the ribosomal stalk of the 50S ribosomal subunit. Interacts with L10 and the large rRNA to form the base of the stalk. L10 forms an elongated spine to which L12 dimers bind in a sequential fashion forming a multimeric L10(L12)X complex. In terms of processing, one or more lysine residues are methylated.

In terms of biological role, forms part of the ribosomal stalk which helps the ribosome interact with GTP-bound translation factors. The sequence is that of Large ribosomal subunit protein uL11 from Xanthomonas axonopodis pv. citri (strain 306).